The chain runs to 269 residues: Formamidopyrimidine-DNA glycosylase (269 aa).

Catalysis depends on Pro2, which acts as the Schiff-base intermediate with DNA. Glu3 (proton donor) is an active-site residue. Residue Lys57 is the Proton donor; for beta-elimination activity of the active site. The DNA site is built by His90, Arg109, and Lys150. An FPG-type zinc finger spans residues Gln235–Lys269. The active-site Proton donor; for delta-elimination activity is the Arg259.

Belongs to the FPG family. In terms of assembly, monomer. It depends on Zn(2+) as a cofactor.

The enzyme catalyses Hydrolysis of DNA containing ring-opened 7-methylguanine residues, releasing 2,6-diamino-4-hydroxy-5-(N-methyl)formamidopyrimidine.. The catalysed reaction is 2'-deoxyribonucleotide-(2'-deoxyribose 5'-phosphate)-2'-deoxyribonucleotide-DNA = a 3'-end 2'-deoxyribonucleotide-(2,3-dehydro-2,3-deoxyribose 5'-phosphate)-DNA + a 5'-end 5'-phospho-2'-deoxyribonucleoside-DNA + H(+). Functionally, involved in base excision repair of DNA damaged by oxidation or by mutagenic agents. Acts as a DNA glycosylase that recognizes and removes damaged bases. Has a preference for oxidized purines, such as 7,8-dihydro-8-oxoguanine (8-oxoG). Has AP (apurinic/apyrimidinic) lyase activity and introduces nicks in the DNA strand. Cleaves the DNA backbone by beta-delta elimination to generate a single-strand break at the site of the removed base with both 3'- and 5'-phosphates. The sequence is that of Formamidopyrimidine-DNA glycosylase from Salmonella enteritidis PT4 (strain P125109).